The primary structure comprises 560 residues: Dihydroxy-acid dehydratase (560 aa).

The disordered stretch occupies residues 1–20; that stretch reads MGDNLKKRSSMTTDGDNRAP. Cys52 lines the [2Fe-2S] cluster pocket. Asp84 lines the Mg(2+) pocket. Cys125 serves as a coordination point for [2Fe-2S] cluster. The Mg(2+) site is built by Asp126 and Lys127. Residue Lys127 is modified to N6-carboxylysine. Cys197 contacts [2Fe-2S] cluster. Glu448 provides a ligand contact to Mg(2+). Ser474 acts as the Proton acceptor in catalysis.

This sequence belongs to the IlvD/Edd family. In terms of assembly, homodimer. [2Fe-2S] cluster is required as a cofactor. Mg(2+) serves as cofactor.

It carries out the reaction (2R)-2,3-dihydroxy-3-methylbutanoate = 3-methyl-2-oxobutanoate + H2O. The enzyme catalyses (2R,3R)-2,3-dihydroxy-3-methylpentanoate = (S)-3-methyl-2-oxopentanoate + H2O. The protein operates within amino-acid biosynthesis; L-isoleucine biosynthesis; L-isoleucine from 2-oxobutanoate: step 3/4. Its pathway is amino-acid biosynthesis; L-valine biosynthesis; L-valine from pyruvate: step 3/4. In terms of biological role, functions in the biosynthesis of branched-chain amino acids. Catalyzes the dehydration of (2R,3R)-2,3-dihydroxy-3-methylpentanoate (2,3-dihydroxy-3-methylvalerate) into 2-oxo-3-methylpentanoate (2-oxo-3-methylvalerate) and of (2R)-2,3-dihydroxy-3-methylbutanoate (2,3-dihydroxyisovalerate) into 2-oxo-3-methylbutanoate (2-oxoisovalerate), the penultimate precursor to L-isoleucine and L-valine, respectively. This is Dihydroxy-acid dehydratase from Leptospira interrogans serogroup Icterohaemorrhagiae serovar copenhageni (strain Fiocruz L1-130).